A 593-amino-acid chain; its full sequence is Trehalose synthase/amylase TreS (593 aa).

A substrate-binding site is contributed by aspartate 90. Residue asparagine 132 participates in Ca(2+) binding. The substrate site is built by histidine 133 and glutamine 198. Aspartate 200 provides a ligand contact to Ca(2+). Residue arginine 228 participates in substrate binding. The active-site Nucleophile is the aspartate 230. Residues tyrosine 234, leucine 235, and glutamate 237 each contribute to the Ca(2+) site. The active-site Proton donor is the glutamate 272. Substrate contacts are provided by histidine 341 and aspartate 342.

Belongs to the glycosyl hydrolase 13 family. TreS subfamily. In terms of assembly, homohexamer.

The catalysed reaction is D-maltose = alpha,alpha-trehalose. It carries out the reaction Endohydrolysis of (1-&gt;4)-alpha-D-glucosidic linkages in polysaccharides containing three or more (1-&gt;4)-alpha-linked D-glucose units.. It participates in glycan biosynthesis; glycogen biosynthesis. With respect to regulation, the amylase activity is stimulated by addition of Ca(2+), but this cation and other divalent cations inhibit the trehalose synthase activity. In addition, trehalose synthase activity, but not amylase activity, is strongly inhibited, and in a competitive manner, by validoxylamine. On the other hand, amylase, but not trehalose synthase activity, is inhibited by the known transition-state amylase inhibitor, acarbose, suggesting the possibility of two different active sites. Other metal ions such as Mg(2+), Mn(2+), and Co(2+) are also somewhat effective in the stimulation of amylase activity, but Hg(2+), Cu(2+), Ni(2+) and Zn(2+) are inhibitory. Its function is as follows. Catalyzes the reversible interconversion of maltose and trehalose by transglucosylation. Maltose is the preferred substrate. To a lesser extent, also displays amylase activity, catalyzing the endohydrolysis of (1-&gt;4)-alpha-D-glucosidic linkages in glycogen and maltooligosaccharides such as maltoheptaose, to produce maltose which then can be converted to trehalose. TreS plays a key role in the utilization of trehalose for the production of glycogen and alpha-glucan via the TreS-Pep2 branch involved in the biosynthesis of maltose-1-phosphate (M1P). Might also function as a sensor and/or regulator of trehalose levels within the cell. Thus, when trehalose levels in the cell become dangerously low, TreS can expedite the conversion of glycogen to maltose via its amylase activity and then convert the maltose to trehalose; but this enzyme also can expedite or promote the conversion of trehalose to glycogen when cytoplasmic trehalose levels become too high. Is also able to catalyze the hydrolytic cleavage of alpha-aryl glucosides, as well as alpha-glucosyl fluoride in vitro. The chain is Trehalose synthase/amylase TreS from Mycolicibacterium smegmatis (strain ATCC 700084 / mc(2)155) (Mycobacterium smegmatis).